A 272-amino-acid polypeptide reads, in one-letter code: Pantothenate synthetase (272 aa).

27 to 34 (MGALHNGH) serves as a coordination point for ATP. Histidine 34 serves as the catalytic Proton donor. Residue glutamine 58 participates in (R)-pantoate binding. Glutamine 58 provides a ligand contact to beta-alanine. ATP is bound at residue 143–146 (GKKD). Glutamine 149 serves as a coordination point for (R)-pantoate. ATP contacts are provided by residues valine 172 and 180-183 (LSSR).

This sequence belongs to the pantothenate synthetase family. As to quaternary structure, homodimer.

Its subcellular location is the cytoplasm. The enzyme catalyses (R)-pantoate + beta-alanine + ATP = (R)-pantothenate + AMP + diphosphate + H(+). Its pathway is cofactor biosynthesis; (R)-pantothenate biosynthesis; (R)-pantothenate from (R)-pantoate and beta-alanine: step 1/1. In terms of biological role, catalyzes the condensation of pantoate with beta-alanine in an ATP-dependent reaction via a pantoyl-adenylate intermediate. This is Pantothenate synthetase from Aliarcobacter butzleri (strain RM4018) (Arcobacter butzleri).